The chain runs to 67 residues: uncharacterized protein (67 aa).

2 helical membrane passes run 8–28 (MWFA…IYLS) and 41–61 (ISSF…VVVF).

The protein resides in the cell membrane. This is an uncharacterized protein from Bacillus subtilis (strain 168).